Consider the following 72-residue polypeptide: Conotoxin Lt6.3 (72 aa).

The first 22 residues, 1-22, serve as a signal peptide directing secretion; sequence MKLTSVVIVAVLFLAACQLTTS. The propeptide occupies 23 to 46; sequence DGSRGTWKDRAVRSITKVSMLRWP. Disulfide bonds link C47–C61, C54–C64, and C60–C71.

It belongs to the conotoxin O1 superfamily. As to expression, expressed by the venom duct.

Its subcellular location is the secreted. The sequence is that of Conotoxin Lt6.3 from Conus litteratus (Lettered cone).